Reading from the N-terminus, the 465-residue chain is ATP synthase subunit beta (465 aa).

Residue 148–155 (GGAGVGKT) coordinates ATP.

This sequence belongs to the ATPase alpha/beta chains family. F-type ATPases have 2 components, CF(1) - the catalytic core - and CF(0) - the membrane proton channel. CF(1) has five subunits: alpha(3), beta(3), gamma(1), delta(1), epsilon(1). CF(0) has three main subunits: a(1), b(2) and c(9-12). The alpha and beta chains form an alternating ring which encloses part of the gamma chain. CF(1) is attached to CF(0) by a central stalk formed by the gamma and epsilon chains, while a peripheral stalk is formed by the delta and b chains.

The protein resides in the cell inner membrane. The catalysed reaction is ATP + H2O + 4 H(+)(in) = ADP + phosphate + 5 H(+)(out). Produces ATP from ADP in the presence of a proton gradient across the membrane. The catalytic sites are hosted primarily by the beta subunits. The chain is ATP synthase subunit beta from Chromobacterium violaceum (strain ATCC 12472 / DSM 30191 / JCM 1249 / CCUG 213 / NBRC 12614 / NCIMB 9131 / NCTC 9757 / MK).